Consider the following 484-residue polypeptide: 6-phosphogluconate dehydrogenase, decarboxylating (484 aa).

NADP(+)-binding positions include 11 to 16 (GLAVMG), 34 to 36 (NRT), 76 to 78 (VRA), and Asn-104. Substrate is bound by residues Asn-104 and 130–132 (SGG). The active-site Proton acceptor is Lys-185. 188–189 (HN) is a substrate binding site. Glu-192 functions as the Proton donor in the catalytic mechanism. Residues Tyr-193, Lys-262, Arg-289, Arg-447, and His-453 each contribute to the substrate site.

It belongs to the 6-phosphogluconate dehydrogenase family. As to quaternary structure, homodimer.

The enzyme catalyses 6-phospho-D-gluconate + NADP(+) = D-ribulose 5-phosphate + CO2 + NADPH. It functions in the pathway carbohydrate degradation; pentose phosphate pathway; D-ribulose 5-phosphate from D-glucose 6-phosphate (oxidative stage): step 3/3. Functionally, catalyzes the oxidative decarboxylation of 6-phosphogluconate to ribulose 5-phosphate and CO(2), with concomitant reduction of NADP to NADPH. This Haemophilus influenzae (strain ATCC 51907 / DSM 11121 / KW20 / Rd) protein is 6-phosphogluconate dehydrogenase, decarboxylating (gnd).